The following is an 85-amino-acid chain: Small ribosomal subunit protein uS17 (85 aa).

It belongs to the universal ribosomal protein uS17 family. As to quaternary structure, part of the 30S ribosomal subunit.

One of the primary rRNA binding proteins, it binds specifically to the 5'-end of 16S ribosomal RNA. This chain is Small ribosomal subunit protein uS17, found in Aggregatibacter actinomycetemcomitans (Actinobacillus actinomycetemcomitans).